Here is a 782-residue protein sequence, read N- to C-terminus: Transcription factor SOX-30 (782 aa).

Disordered regions lie at residues 1-37 (MERA…AQPV), 95-117 (LPPG…AAAA), and 139-226 (PPQS…DALK). Pro residues-rich tracts occupy residues 7-35 (EPPP…PPAQ) and 97-106 (PGGPGVPPAP). Basic and acidic residues predominate over residues 203–226 (LDGRRSDEKKAKLEAEEAPRDALK). A DNA-binding region (HMG box) is located at residues 366–434 (VKRPMNAFMV…KHREEFPGWV (69 aa)). Disordered regions lie at residues 501–604 (PTPA…STCP), 704–724 (YPDE…DGPP), and 756–782 (ASAP…LRNL). The span at 512–522 (TLFQPSVSSTG) shows a compositional bias: polar residues. Over residues 525-538 (AVPPPSLTPRPSLP) the composition is skewed to pro residues. Polar residues predominate over residues 555-574 (SGSSRSVKRSTPGSLESTTR). Basic and acidic residues predominate over residues 704 to 718 (YPDEHTHSEDSRSCE).

As to quaternary structure, interacts with CTNNB1, competitively inhibiting CTNNB1-TCF7L2/TCF4 interaction. Expressed in the lung (at protein level). Expressed in testes (at protein level). Expressed in preleptotene spermatocytes, round spermatids, and elongated spermatids in the testis (at protein level). Expressed in pachytene spermatocytes during stages 3 to 8 of spermatogenesis (at protein level). Increased expression in diplotene spermatocytes at stage 9-11 and in metaphase spermatocytes or secondary spermatocytes at stage 12. Expressed in ovaries.

The protein resides in the nucleus. It localises to the cytoplasm. Its function is as follows. Acts both as a transcriptional activator and a repressor. Binds to the DNA sequence 5'-ACAAT-3' and shows a preference for guanine residues surrounding this core motif. Binds to its own promoter and activates its own transcription. Required to activate the expression of postmeiotic genes involved in spermiogenesis. Binds to the promoter region of CTNNB1 and represses its transcription which leads to inhibition of Wnt signaling. Also inhibits Wnt signaling by binding to the CTNNB1 protein, preventing interaction of CTNNB1 with TCF7L2/TCF4. The chain is Transcription factor SOX-30 (Sox30) from Mus musculus (Mouse).